The sequence spans 314 residues: tRNA(Ile)-lysidine synthase (314 aa).

Residue 37–42 participates in ATP binding; sequence SGGPDS.

This sequence belongs to the tRNA(Ile)-lysidine synthase family.

The protein resides in the cytoplasm. It carries out the reaction cytidine(34) in tRNA(Ile2) + L-lysine + ATP = lysidine(34) in tRNA(Ile2) + AMP + diphosphate + H(+). Ligates lysine onto the cytidine present at position 34 of the AUA codon-specific tRNA(Ile) that contains the anticodon CAU, in an ATP-dependent manner. Cytidine is converted to lysidine, thus changing the amino acid specificity of the tRNA from methionine to isoleucine. This chain is tRNA(Ile)-lysidine synthase, found in Corynebacterium glutamicum (strain ATCC 13032 / DSM 20300 / JCM 1318 / BCRC 11384 / CCUG 27702 / LMG 3730 / NBRC 12168 / NCIMB 10025 / NRRL B-2784 / 534).